Reading from the N-terminus, the 254-residue chain is Inner membrane protein YabI (254 aa).

Residues 1 to 7 (MQALLEH) lie on the Periplasmic side of the membrane. 2 helical membrane passes run 8–28 (FITQSTVYSLMAVVLVAFLES) and 29–49 (LALVGLILPGTVLMAGLGALI). The Periplasmic portion of the chain corresponds to 50-58 (GSGELSFWH). A helical membrane pass occupies residues 59-79 (AWLAGIIGCLMGDWISFWLGW). Topologically, residues 80-144 (RFKKPLHRWS…LPVAKFITPN (65 aa)) are cytoplasmic. The chain crosses the membrane as a helical span at residues 145–165 (IIGCLLWPPFYFLPGILAGAA). The Periplasmic portion of the chain corresponds to 166 to 178 (IDIPAGMQSGEFK). A helical transmembrane segment spans residues 179–199 (WLLLATAVFLWVGGWLCWRLW). Topologically, residues 200 to 215 (RSGKATDRLSHYLSRG) are cytoplasmic. A helical transmembrane segment spans residues 216–236 (RLLWLTPLISAIGVVALVVLI). Residues 237-254 (RHPLMPVYIDILRKVVGV) are Periplasmic-facing.

Belongs to the DedA family.

It is found in the cell inner membrane. The sequence is that of Inner membrane protein YabI (yabI) from Escherichia coli (strain K12).